We begin with the raw amino-acid sequence, 120 residues long: Ribosome-binding factor A (120 aa).

It belongs to the RbfA family. As to quaternary structure, monomer. Binds 30S ribosomal subunits, but not 50S ribosomal subunits or 70S ribosomes.

The protein resides in the cytoplasm. One of several proteins that assist in the late maturation steps of the functional core of the 30S ribosomal subunit. Associates with free 30S ribosomal subunits (but not with 30S subunits that are part of 70S ribosomes or polysomes). Required for efficient processing of 16S rRNA. May interact with the 5'-terminal helix region of 16S rRNA. This is Ribosome-binding factor A from Chlorobaculum parvum (strain DSM 263 / NCIMB 8327) (Chlorobium vibrioforme subsp. thiosulfatophilum).